The chain runs to 339 residues: Aspartate carbamoyltransferase catalytic subunit (339 aa).

Positions 59 and 60 each coordinate carbamoyl phosphate. Residue lysine 87 participates in L-aspartate binding. Positions 109, 142, and 145 each coordinate carbamoyl phosphate. Residues arginine 182 and arginine 253 each contribute to the L-aspartate site. Carbamoyl phosphate contacts are provided by glycine 294 and proline 295.

This sequence belongs to the aspartate/ornithine carbamoyltransferase superfamily. ATCase family. In terms of assembly, heterododecamer (2C3:3R2) of six catalytic PyrB chains organized as two trimers (C3), and six regulatory PyrI chains organized as three dimers (R2).

It catalyses the reaction carbamoyl phosphate + L-aspartate = N-carbamoyl-L-aspartate + phosphate + H(+). It participates in pyrimidine metabolism; UMP biosynthesis via de novo pathway; (S)-dihydroorotate from bicarbonate: step 2/3. Functionally, catalyzes the condensation of carbamoyl phosphate and aspartate to form carbamoyl aspartate and inorganic phosphate, the committed step in the de novo pyrimidine nucleotide biosynthesis pathway. The protein is Aspartate carbamoyltransferase catalytic subunit of Prochlorococcus marinus (strain NATL2A).